The following is a 1307-amino-acid chain: Histone-lysine N-methyltransferase SETDB1 (1307 aa).

The stretch at 30-65 forms a coiled coil; sequence VEELGISMEELRQYIDEELEKMDCIQQRKKQLAELE. Phosphoserine is present on residues Ser112 and Ser117. Thr120 is subject to Phosphothreonine. The interval 127–148 is disordered; that stretch reads DEDDDVLSIDSGDAGSRTPKDQ. Lys182 participates in a covalent cross-link: Glycyl lysine isopeptide (Lys-Gly) (interchain with G-Cter in SUMO2); alternate. Lys182 is covalently cross-linked (Glycyl lysine isopeptide (Lys-Gly) (interchain with G-Cter in ubiquitin); alternate). Tudor domains are found at residues 257–320 and 347–403; these read KLFV…LKKT and LLKS…SMKT. Disordered stretches follow at residues 404–424, 444–512, and 531–570; these read SSAS…PNMG, IQFK…TLSE, and SVTS…AFHG. Pro residues predominate over residues 454-467; that stretch reads PIAPPAPLPIPPLS. The segment covering 476-494 has biased composition (polar residues); that stretch reads ESQLAQSRKQVAKKSTSFR. Over residues 495-512 the composition is skewed to low complexity; the sequence is PGSVGSGHSSPTSSTLSE. The segment covering 539–565 has biased composition (pro residues); sequence AAPPVPPVPPGPPTPPGPPAPPGPLAP. Residues 611–682 form the MBD domain; that stretch reads YRGKNPLLVP…EMFCLDPYVL (72 aa). One can recognise a Pre-SET domain in the interval 744–817; it reads VGCDCKDGCR…MCTNRLVQHG (74 aa). Residues Cys746, Cys748, Cys752, Cys758, Cys760, Cys798, Cys802, Cys804, and Cys809 each contribute to the Zn(2+) site. Positions 820–1282 constitute an SET domain; it reads VRLQLFKTQN…AGTELTWDYN (463 aa). S-adenosyl-L-methionine-binding positions include 830–832, Asp868, and Tyr870; that span reads KGW. Lys884 participates in a covalent cross-link: Glycyl lysine isopeptide (Lys-Gly) (interchain with G-Cter in ubiquitin). Residues 885–1174 are disordered; sequence EGYESDVPTS…KNLSGPTKRQ (290 aa). The span at 913–924 shows a compositional bias: acidic residues; it reads EDPEESNDDSSD. Basic and acidic residues predominate over residues 950–966; it reads GQKENELSEMTSKDSRP. Ser1042 bears the Phosphoserine mark. Positions 1048 to 1066 are enriched in basic and acidic residues; the sequence is FKDEGDNKQPKKEDPENRN. Residue Lys1049 forms a Glycyl lysine isopeptide (Lys-Gly) (interchain with G-Cter in SUMO2); alternate linkage. Residue Lys1049 forms a Glycyl lysine isopeptide (Lys-Gly) (interchain with G-Cter in SUMO1); alternate linkage. Residues Lys1055 and Lys1085 each participate in a glycyl lysine isopeptide (Lys-Gly) (interchain with G-Cter in SUMO2) cross-link. The span at 1097 to 1112 shows a compositional bias: polar residues; it reads SVLQSQRVVTSTQSNP. The span at 1116-1131 shows a compositional bias: low complexity; the sequence is LTLSSSTESEGESGTS. Polar residues predominate over residues 1137 to 1156; that stretch reads GHTSATAVDSDDIQTISSGS. Lys1165 participates in a covalent cross-link: Glycyl lysine isopeptide (Lys-Gly) (interchain with G-Cter in SUMO2). Residues Lys1186 and Lys1194 each carry the N6,N6,N6-trimethyllysine; alternate modification. An N6,N6-dimethyllysine; alternate mark is found at Lys1186 and Lys1194. S-adenosyl-L-methionine is bound by residues Arg1236 and 1239–1240; that span reads NH. The Zn(2+) site is built by Cys1242, Cys1295, Cys1297, and Cys1302. Residues 1291-1307 form the Post-SET domain; the sequence is KELLCCCGAIECRGRLL.

The protein belongs to the class V-like SAM-binding methyltransferase superfamily. Histone-lysine methyltransferase family. Suvar3-9 subfamily. In terms of assembly, part of a complex containing at least CDYL, REST, WIZ, SETDB1, EHMT1 and EHMT2. Forms a complex with ATRX, TRIM28 and ZNF274. Probably part of a corepressor complex containing ZNF304, TRIM28, SETDB1 and DNMT1. Interacts with TRIM28/TIF1B. Interacts with ATF7IP and ATF7IP2; the interaction with ATF7IP is required to stimulate histone methyltransferase activity and facilitate the conversion of dimethylated to trimethylated H3 'Lys-9'. Interacts with MBD1; interaction is abolished when MBD1 is sumoylated. Interacts with CBX1 and CBX5. Interacts with DNMT3A and DNMT3B. Interacts with SUMO2. Interacts with MPHOSPH8. Interacts with ERG. Interacts with HDAC1, HDAC2, SIN3A, SIN3B. Interacts with ATRX. Interacts with RESF1. Interacts with ZNF638. Interacts with TASOR. Interacts with ZNF263; recruited to the SIX3 promoter along with other proteins involved in chromatin modification and transcriptional corepression where it contributes to transcriptional repression. Interacts with PHF13; the interaction probably enhances SETDB1 chromatin-associated levels and activity. Interacts with VRK1. In terms of processing, degraded by the proteasome, shielded by interaction with ATF7IP. Post-translationally, monoubiquitinated at Lys-884 by E2 enzymes UBE2E family. The conjugated-Ub is protected from deubiquitination through the SET domain. Monoubiquitination at Lys-884 is required for catalytic activity and H3K9 methylation and endogenous retrovirus silencing. Ubiquitously expressed. Strong expression in liver and testis. Expressed in the brain, lungs, kidneys, uterus and seminal vesicles.

It is found in the nucleus. The protein localises to the chromosome. The catalysed reaction is N(6),N(6)-dimethyl-L-lysyl(9)-[histone H3] + S-adenosyl-L-methionine = N(6),N(6),N(6)-trimethyl-L-lysyl(9)-[histone H3] + S-adenosyl-L-homocysteine + H(+). In terms of biological role, histone methyltransferase that specifically trimethylates 'Lys-9' of histone H3. H3 'Lys-9' trimethylation represents a specific tag for epigenetic transcriptional repression by recruiting HP1 (CBX1, CBX3 and/or CBX5) proteins to methylated histones. Mainly functions in euchromatin regions, thereby playing a central role in the silencing of euchromatic genes. H3 'Lys-9' trimethylation is coordinated with DNA methylation. Probably forms a complex with MBD1 and ATF7IP that represses transcription and couples DNA methylation and histone 'Lys-9' trimethylation. Its activity is dependent on MBD1 and is heritably maintained through DNA replication by being recruited by CAF-1. SETDB1 is targeted to histone H3 by TRIM28/TIF1B, a factor recruited by KRAB zinc-finger proteins. Probably forms a corepressor complex required for activated KRAS-mediated promoter hypermethylation and transcriptional silencing of tumor suppressor genes (TSGs) or other tumor-related genes in colorectal cancer (CRC) cells. Required to maintain a transcriptionally repressive state of genes in undifferentiated embryonic stem cells (ESCs). In ESCs, in collaboration with TRIM28, is also required for H3K9me3 and silencing of endogenous and introduced retroviruses in a DNA-methylation independent-pathway. Associates at promoter regions of tumor suppressor genes (TSGs) leading to their gene silencing. The SETDB1-TRIM28-ZNF274 complex may play a role in recruiting ATRX to the 3'-exons of zinc-finger coding genes with atypical chromatin signatures to establish or maintain/protect H3K9me3 at these transcriptionally active regions. In Mus musculus (Mouse), this protein is Histone-lysine N-methyltransferase SETDB1.